The following is a 98-amino-acid chain: uncharacterized protein (98 aa).

The interval Ala58–His98 is disordered.

This is an uncharacterized protein from Saccharomyces cerevisiae (strain ATCC 204508 / S288c) (Baker's yeast).